A 397-amino-acid polypeptide reads, in one-letter code: MTTLLNPYFGEFGGMYVPQILMPALRQLEEAFVSAQKDPEFQAQFNDLLKNYAGRPTALTKCQNITAGTNTTLYLKREDLLHGGAHKTNQVLGQALLAKRMGKTEIIAETGAGQHGVASALASALLGLKCRIYMGAKDVERQSPNVFRMRLMGAEVIPVHSGSATLKDACNEALRDWSGSYETAHYMLGTAAGPHPYPTIVREFQRMIGEETKAQILEREGRLPDAVIACVGGGSNAIGMFADFINETDVGLIGVEPGGHGIETGEHGAPLKHGRVGIYFGMKAPMMQTEDGQIEESYSISAGLDFPSVGPQHAYLNSIGRADYVSITDDEALEAFKTLCLHEGIIPALESSHALAHALKMMRENPEKEQLLVVNLSGRGDKDIFTVHDILKARGEI.

K87 carries the N6-(pyridoxal phosphate)lysine modification.

This sequence belongs to the TrpB family. Tetramer of two alpha and two beta chains. Requires pyridoxal 5'-phosphate as cofactor.

The enzyme catalyses (1S,2R)-1-C-(indol-3-yl)glycerol 3-phosphate + L-serine = D-glyceraldehyde 3-phosphate + L-tryptophan + H2O. It participates in amino-acid biosynthesis; L-tryptophan biosynthesis; L-tryptophan from chorismate: step 5/5. In terms of biological role, the beta subunit is responsible for the synthesis of L-tryptophan from indole and L-serine. The chain is Tryptophan synthase beta chain from Escherichia fergusonii (strain ATCC 35469 / DSM 13698 / CCUG 18766 / IAM 14443 / JCM 21226 / LMG 7866 / NBRC 102419 / NCTC 12128 / CDC 0568-73).